A 131-amino-acid chain; its full sequence is Small ribosomal subunit protein uS8 (131 aa).

The protein belongs to the universal ribosomal protein uS8 family. In terms of assembly, part of the 30S ribosomal subunit. Contacts proteins S5 and S12.

Its function is as follows. One of the primary rRNA binding proteins, it binds directly to 16S rRNA central domain where it helps coordinate assembly of the platform of the 30S subunit. The polypeptide is Small ribosomal subunit protein uS8 (Dechloromonas aromatica (strain RCB)).